The primary structure comprises 635 residues: DNA-directed RNA polymerase III subunit rpc3 (635 aa).

Disordered stretches follow at residues 131–164, 246–295, and 386–424; these read PEQS…SDQQ, VPRG…GYDT, and SGSI…LSSG. The span at 272–292 shows a compositional bias: acidic residues; sequence SVDEDDEQDEEENEWSDDEMG. Residues 398-407 show a composition bias toward basic and acidic residues; the sequence is DNRRGKRPLE. Polar residues predominate over residues 411 to 424; the sequence is NGTNHEGANGLSSG. The leucine-zipper stretch occupies residues 562-583; that stretch reads TYKAMSRCFQRLRFERNRLKEF.

It belongs to the RNA polymerase beta chain family. In terms of assembly, component of the RNA polymerase III (Pol III) complex consisting of 17 subunits.

It is found in the nucleus. DNA-dependent RNA polymerase catalyzes the transcription of DNA into RNA using the four ribonucleoside triphosphates as substrates. Specific core component of RNA polymerase III which synthesizes small RNAs, such as 5S rRNA and tRNAs. This is DNA-directed RNA polymerase III subunit rpc3 (rpc82) from Aspergillus clavatus (strain ATCC 1007 / CBS 513.65 / DSM 816 / NCTC 3887 / NRRL 1 / QM 1276 / 107).